The primary structure comprises 290 residues: MKNTFSRLFGFGDKMSELEIQNESHEDINKKIHEEIHEIPIANIIPNRYQPRTVFDDARIDELALTIRTHGLIQPIVVRQYEEDCYEIIAGERRFRAATKLGWEKVPAIIKNLNDTETASVALIENLQREELTAIEEAVAYQKLIELHNLTQEALAQRLGKGQSTIANKLRLLKLPEDIKRSLLEKSITERHARALIPLKNEELQLKVLQEIVEKQLNVKQTEERIAKLLEEVKPKRKAKKKAVSRDMRIAMNTIRQSLQMVAKSGLNVNSEEEEFDEYYQITIKIPKKK.

The H-T-H motif DNA-binding region spans 153–172; sequence EALAQRLGKGQSTIANKLRL.

It belongs to the ParB family.

Its subcellular location is the cytoplasm. The protein localises to the nucleoid. Effects nucleoid occlusion by binding relatively nonspecifically to DNA and preventing the assembly of the division machinery in the vicinity of the nucleoid, especially under conditions that disturb the cell cycle. It helps to coordinate cell division and chromosome segregation by preventing the formation of the Z ring through the nucleoid, which would cause chromosome breakage. This Bacillus cytotoxicus (strain DSM 22905 / CIP 110041 / 391-98 / NVH 391-98) protein is Nucleoid occlusion protein.